The following is a 61-amino-acid chain: Probradykinin-2 (61 aa).

An N-terminal signal peptide occupies residues 1 to 22 (MSFLKKSLFLVLFLGLVSFSIC). A propeptide spanning residues 23–50 (EEEKRETEEEENEDEIEEQSEEKKRFEP) is cleaved from the precursor. A disordered region spans residues 24–61 (EEKRETEEEENEDEIEEQSEEKKRFEPVPPGFTPFRQT). A compositionally biased stretch (acidic residues) spans 30–42 (EEEENEDEIEEQS). A 4-hydroxyproline modification is found at P52.

The protein belongs to the frog skin active peptide (FSAP) family. Bradykinin-related peptide subfamily. In terms of tissue distribution, expressed by the skin glands.

It is found in the secreted. In terms of biological role, may produce in vitro relaxation of rat arterial smooth muscle and constriction of intestinal smooth muscle. May target bradykinin receptors (BDKRB). The chain is Probradykinin-2 from Pithecopus azureus (Orange-legged monkey tree frog).